A 376-amino-acid polypeptide reads, in one-letter code: UDP-4-amino-4,6-dideoxy-N-acetyl-beta-L-altrosamine transaminase (376 aa).

Residues Tyr-4, 24–27, Ala-54, and Ser-176 each bind substrate; that span reads EILT. An N6-(pyridoxal phosphate)lysine modification is found at Lys-181. Residues Asn-226 and 311 to 314 each bind substrate; that span reads QVHY.

The protein belongs to the DegT/DnrJ/EryC1 family.

The catalysed reaction is UDP-4-amino-4,6-dideoxy-N-acetyl-beta-L-altrosamine + 2-oxoglutarate = UDP-2-acetamido-2,6-dideoxy-beta-L-arabino-hex-4-ulose + L-glutamate. In terms of biological role, catalyzes the second step in the biosynthesis of pseudaminic acid, a sialic-acid-like sugar that is used to modify flagellin. Uses UDP-2-acetamido-2,6-dideoxy-beta-L-arabino-4-hexulose as substrate producing UDP-4-amino-4,6-dideoxy-beta-L-AltNAc. This chain is UDP-4-amino-4,6-dideoxy-N-acetyl-beta-L-altrosamine transaminase (pseC), found in Campylobacter jejuni subsp. jejuni serotype O:23/36 (strain 81-176).